The primary structure comprises 200 residues: Lipid A acyltransferase PagP (200 aa).

An N-terminal signal peptide occupies residues 1 to 24 (MRLKLTSHTCLFALSSLLVTPAFA). Active-site residues include histidine 72, aspartate 115, and serine 116.

The protein belongs to the lipid A palmitoyltransferase family. As to quaternary structure, homodimer.

The protein localises to the cell outer membrane. It carries out the reaction a lipid A + a 1,2-diacyl-sn-glycero-3-phosphocholine = a hepta-acyl lipid A + a 2-acyl-sn-glycero-3-phosphocholine. The catalysed reaction is a lipid IVA + a 1,2-diacyl-sn-glycero-3-phosphocholine = a lipid IVB + a 2-acyl-sn-glycero-3-phosphocholine. It catalyses the reaction a lipid IIA + a 1,2-diacyl-sn-glycero-3-phosphocholine = a lipid IIB + a 2-acyl-sn-glycero-3-phosphocholine. Transfers a fatty acid residue from the sn-1 position of a phospholipid to the N-linked hydroxyfatty acid chain on the proximal unit of lipid A or its precursors. The chain is Lipid A acyltransferase PagP from Dickeya dadantii (strain 3937) (Erwinia chrysanthemi (strain 3937)).